The primary structure comprises 145 residues: Endoribonuclease YbeY (145 aa).

Zn(2+) is bound by residues His109, His113, and His119.

Belongs to the endoribonuclease YbeY family. The cofactor is Zn(2+).

Its subcellular location is the cytoplasm. Its function is as follows. Single strand-specific metallo-endoribonuclease involved in late-stage 70S ribosome quality control and in maturation of the 3' terminus of the 16S rRNA. The chain is Endoribonuclease YbeY from Ruthia magnifica subsp. Calyptogena magnifica.